A 292-amino-acid chain; its full sequence is 4-hydroxy-tetrahydrodipicolinate synthase (292 aa).

Pyruvate is bound at residue Thr45. The active-site Proton donor/acceptor is the Tyr133. The active-site Schiff-base intermediate with substrate is Lys161. Pyruvate is bound at residue Ile203.

Belongs to the DapA family. In terms of assembly, homotetramer; dimer of dimers.

It is found in the cytoplasm. It carries out the reaction L-aspartate 4-semialdehyde + pyruvate = (2S,4S)-4-hydroxy-2,3,4,5-tetrahydrodipicolinate + H2O + H(+). It participates in amino-acid biosynthesis; L-lysine biosynthesis via DAP pathway; (S)-tetrahydrodipicolinate from L-aspartate: step 3/4. Catalyzes the condensation of (S)-aspartate-beta-semialdehyde [(S)-ASA] and pyruvate to 4-hydroxy-tetrahydrodipicolinate (HTPA). The polypeptide is 4-hydroxy-tetrahydrodipicolinate synthase (Vibrio vulnificus (strain YJ016)).